The primary structure comprises 494 residues: 4-trimethylaminobutyraldehyde dehydrogenase (494 aa).

An N-acetylserine modification is found at S2. N6-acetyllysine; alternate is present on K30. K30 is modified (N6-succinyllysine; alternate). An N6-succinyllysine modification is found at K59. NAD(+)-binding positions include K180 and 232 to 236 (GSVPT). E254 (proton acceptor) is an active-site residue. C288 (nucleophile) is an active-site residue. Position 298 is an N6-acetyllysine (K298). An N6-acetyllysine; alternate modification is found at K303. K303 is modified (N6-succinyllysine; alternate). Residue K344 is modified to N6-acetyllysine. E391 lines the NAD(+) pocket.

It belongs to the aldehyde dehydrogenase family. Homotetramer.

The protein localises to the cytoplasm. It is found in the cytosol. The enzyme catalyses 4-(trimethylamino)butanal + NAD(+) + H2O = 4-(trimethylamino)butanoate + NADH + 2 H(+). It carries out the reaction an aldehyde + NAD(+) + H2O = a carboxylate + NADH + 2 H(+). The catalysed reaction is 4-aminobutanal + NAD(+) + H2O = 4-aminobutanoate + NADH + 2 H(+). It catalyses the reaction formaldehyde + NAD(+) + H2O = formate + NADH + 2 H(+). The enzyme catalyses acetaldehyde + NAD(+) + H2O = acetate + NADH + 2 H(+). It carries out the reaction imidazole-4-acetaldehyde + NAD(+) + H2O = imidazole-4-acetate + NADH + 2 H(+). The catalysed reaction is acrolein + NAD(+) + H2O = acrylate + NADH + 2 H(+). It catalyses the reaction (5-hydroxyindol-3-yl)acetaldehyde + NAD(+) + H2O = (5-hydroxyindol-3-yl)acetate + NADH + 2 H(+). The enzyme catalyses 3,4-dihydroxyphenylacetaldehyde + NAD(+) + H2O = 3,4-dihydroxyphenylacetate + NADH + 2 H(+). It carries out the reaction spermine monoaldehyde + NAD(+) + H2O = N-(2-carboxyethyl)spermidine + NADH + 2 H(+). The catalysed reaction is propanal + NAD(+) + H2O = propanoate + NADH + 2 H(+). It catalyses the reaction butanal + NAD(+) + H2O = butanoate + NADH + 2 H(+). The enzyme catalyses pentanal + NAD(+) + H2O = pentanoate + NADH + 2 H(+). It carries out the reaction hexanal + NAD(+) + H2O = hexanoate + NADH + 2 H(+). It functions in the pathway amine and polyamine biosynthesis; carnitine biosynthesis. Functionally, converts gamma-trimethylaminobutyraldehyde into gamma-butyrobetaine with high efficiency (in vitro). Can catalyze the irreversible oxidation of a broad range of aldehydes to the corresponding acids in an NAD-dependent reaction, but with low efficiency. Catalyzes the oxidation of aldehydes arising from biogenic amines and polyamines. This Sus scrofa (Pig) protein is 4-trimethylaminobutyraldehyde dehydrogenase (ALDH9A1).